A 581-amino-acid polypeptide reads, in one-letter code: Sulfate adenylyltransferase (581 aa).

The interval 1 to 176 (MANAPHGGVL…VQAIQAPTHF (176 aa)) is N-terminal. The tract at residues 177-401 (DYVPLRYTPA…LRESYPPRPQ (225 aa)) is catalytic. Q204 is a sulfate binding site. Residues 204–207 (QTRN) and 298–301 (GRDH) contribute to the ATP site. Residues T205, R206, and N207 contribute to the active site. R206 contributes to the sulfate binding site. A302 provides a ligand contact to sulfate. M340 serves as a coordination point for ATP. The allosteric regulation domain; adenylyl-sulfate kinase-like stretch occupies residues 402–581 (QGFTILLTGL…IMILESQNLV (180 aa)). Residues 441–444 (EELR), 486–487 (TA), and R526 contribute to the 3'-phosphoadenylyl sulfate site.

This sequence in the N-terminal section; belongs to the sulfate adenylyltransferase family. In the C-terminal section; belongs to the APS kinase family. Homohexamer. Dimer of trimers.

Its subcellular location is the cytoplasm. It carries out the reaction sulfate + ATP + H(+) = adenosine 5'-phosphosulfate + diphosphate. It participates in sulfur metabolism; hydrogen sulfide biosynthesis; sulfite from sulfate: step 1/3. With respect to regulation, allosterically inhibited by 3'-phosphoadenosine 5'-phosphosulfate (PAPS). In terms of biological role, catalyzes the first intracellular reaction of sulfate assimilation, forming adenosine-5'-phosphosulfate (APS) from inorganic sulfate and ATP. Plays an important role in sulfate activation as a component of the biosynthesis pathway of sulfur-containing amino acids. This Cryptococcus neoformans var. grubii serotype A (strain H99 / ATCC 208821 / CBS 10515 / FGSC 9487) (Filobasidiella neoformans var. grubii) protein is Sulfate adenylyltransferase.